The primary structure comprises 659 residues: DNA helicase/primase complex-associated protein (659 aa).

The protein belongs to the herpesviridae HEPA family. Associates with the primase and the helicase to form the helicase-primase complex. Interacts with the origin-binding protein. Interacts with the polymerase catalytic subunit.

The protein localises to the host nucleus. In terms of biological role, component of the helicase/primase complex. Unwinds the DNA at the replication forks and generates single-stranded DNA for both leading and lagging strand synthesis. The primase synthesizes short RNA primers on the lagging strand that the polymerase presumably elongates using dNTPs. The primase-associated factor has no known catalytic activity in the complex and may serve to facilitate the formation of the replisome by directly interacting with the origin-binding protein and the polymerase. The polypeptide is DNA helicase/primase complex-associated protein (U74) (Human herpesvirus 7 (strain JI) (HHV-7)).